We begin with the raw amino-acid sequence, 88 residues long: Large ribosomal subunit protein bL27 (88 aa).

A disordered region spans residues 1-23; that stretch reads MAHKKAGGSSRNGRDSAGRRLGV.

This sequence belongs to the bacterial ribosomal protein bL27 family.

This Methylorubrum populi (strain ATCC BAA-705 / NCIMB 13946 / BJ001) (Methylobacterium populi) protein is Large ribosomal subunit protein bL27.